We begin with the raw amino-acid sequence, 356 residues long: Tyrosine recombinase XerS (356 aa).

A Core-binding (CB) domain is found at 16 to 121 (IMPWYVLDYY…ALSSLYKYLT (106 aa)). Positions 169–354 (AFLDYVDKEY…VNDEQKNALD (186 aa)) constitute a Tyr recombinase domain. Active-site residues include Arg-210, Lys-234, His-306, Arg-309, and His-332. Tyr-341 serves as the catalytic O-(3'-phospho-DNA)-tyrosine intermediate.

This sequence belongs to the 'phage' integrase family. XerS subfamily.

The protein resides in the cytoplasm. With respect to regulation, ftsK is required for recombination. Its function is as follows. Site-specific tyrosine recombinase, which acts by catalyzing the cutting and rejoining of the recombining DNA molecules. Essential to convert dimers of the bacterial chromosome into monomers to permit their segregation at cell division. The sequence is that of Tyrosine recombinase XerS from Streptococcus equi subsp. zooepidemicus (strain H70).